A 151-amino-acid polypeptide reads, in one-letter code: MKIWVDADACPVVIKEILFKAADRTKIAITLVANHHVRIPPSPFISFMQVSSGFDVADDEIVKRIEANDLVITSDIPLADEVIDKSGIALSPRGELYTKENIKSRLNIRDFMDTMRASGVHTGGPPALNQTDRQNFANHLDRIITQFKKTQ.

Belongs to the UPF0178 family.

The protein is UPF0178 protein CPS_3584 of Colwellia psychrerythraea (strain 34H / ATCC BAA-681) (Vibrio psychroerythus).